The following is a 582-amino-acid chain: MAPRIRVLAALDQARTQYYHFKAIVIAGMGLFTDSYDLFCISPVMKIFGRVYYAPSGSVDGSGSGPGVTPPAVVSATVGVALLGAVAGNVVFGALGDRVGRRRVYGACLLLMVCSSVGSGLSVCRTRRCALASLCFFRFLLGVGVGGDYPLSATIMSEFANRRTRGAFIAAVFSMQGFGILVSSAVTMAVAAAFDHYTGYPAPLDTPECADLAWRIILMAGAVPAALTYYWRMSMPETARYTALVERDVVKATNDIGRVLADLDLAAVAEEEVAAAALSPPPVTTPPPPRPSYGLFSRRFVRQHGRDLFACAAAWFLLDIPYYSSTLFQSQIYRPWFPPAAKVNAFQEAFNVAKFQAVIAVASTIPGYFAAMLLIERAGRRRLQMAGFLLMAVFLFALAGPYDGYWRDHAKTAGYIVLYSLTFFSANLGPNTTTFILPAELFPARFRSTCHGLSGAAGKLGALVGSIGFLWASQQKDGAAAGHLPGIGMMYALFVLGGICLLGLALTYAFTPETMTRSLEENESSVQAQSQVGDGGSDAGNGSDGLRFHELNVLMEAATKSPVSMASSHLSMSPILPHRMSL.

The Cytoplasmic portion of the chain corresponds to 1-23; the sequence is MAPRIRVLAALDQARTQYYHFKA. The chain crosses the membrane as a helical span at residues 24–44; the sequence is IVIAGMGLFTDSYDLFCISPV. Residues 45–75 are Extracellular-facing; it reads MKIFGRVYYAPSGSVDGSGSGPGVTPPAVVS. A helical transmembrane segment spans residues 76–96; the sequence is ATVGVALLGAVAGNVVFGALG. Over 97-103 the chain is Cytoplasmic; it reads DRVGRRR. A helical membrane pass occupies residues 104 to 124; that stretch reads VYGACLLLMVCSSVGSGLSVC. Residues 125–130 are Extracellular-facing; sequence RTRRCA. A helical transmembrane segment spans residues 131–151; the sequence is LASLCFFRFLLGVGVGGDYPL. The Cytoplasmic segment spans residues 152–165; the sequence is SATIMSEFANRRTR. A helical transmembrane segment spans residues 166 to 186; the sequence is GAFIAAVFSMQGFGILVSSAV. Over 187 to 210 the chain is Extracellular; that stretch reads TMAVAAAFDHYTGYPAPLDTPECA. A helical transmembrane segment spans residues 211–231; the sequence is DLAWRIILMAGAVPAALTYYW. Residues 232–307 lie on the Cytoplasmic side of the membrane; that stretch reads RMSMPETARY…RRFVRQHGRD (76 aa). Residues 308 to 328 traverse the membrane as a helical segment; sequence LFACAAAWFLLDIPYYSSTLF. Over 329–354 the chain is Extracellular; the sequence is QSQIYRPWFPPAAKVNAFQEAFNVAK. Residues 355 to 375 traverse the membrane as a helical segment; sequence FQAVIAVASTIPGYFAAMLLI. Over 376–385 the chain is Cytoplasmic; the sequence is ERAGRRRLQM. A helical transmembrane segment spans residues 386–406; that stretch reads AGFLLMAVFLFALAGPYDGYW. The Extracellular segment spans residues 407–415; it reads RDHAKTAGY. Residues 416-436 traverse the membrane as a helical segment; sequence IVLYSLTFFSANLGPNTTTFI. The Cytoplasmic portion of the chain corresponds to 437-451; sequence LPAELFPARFRSTCH. A helical transmembrane segment spans residues 452-472; that stretch reads GLSGAAGKLGALVGSIGFLWA. At 473–485 the chain is on the extracellular side; it reads SQQKDGAAAGHLP. The helical transmembrane segment at 486–506 threads the bilayer; the sequence is GIGMMYALFVLGGICLLGLAL. Topologically, residues 507-582 are cytoplasmic; it reads TYAFTPETMT…SPILPHRMSL (76 aa). A disordered region spans residues 519–541; that stretch reads LEENESSVQAQSQVGDGGSDAGN.

It belongs to the major facilitator superfamily. Phosphate:H(+) symporter (TC 2.A.1.9) family. Expressed at low levels in roots.

It localises to the membrane. In terms of biological role, high-affinity transporter for external inorganic phosphate. The protein is Probable inorganic phosphate transporter 1-9 (PHT1-9) of Oryza sativa subsp. japonica (Rice).